The following is a 357-amino-acid chain: MKKRTFALALSMIIASGVILGACGSSSDDKKSSDDKSSKDFTVAMVTDTGGVDDRSFNQSAWEGLQKFGKANDMEKGTDGYNYLQSASEADYKTNLNTAVRSDYDLIYGIGYKLKDAIEEVSKQKPKNQFAIVDDTIDDRDNVVSIGFKDNDGSYLVGVVAGLTTKTNKVGFVGGVKGTVIDRFEAGFTAGVKAVNPNAQIDVQYANDFAKADKGQQIASSMYSSGVDVIFHAAGGTGNGVFAEAKNLKKKDPSRAVWVIGVDRDQWDEGKVTANDGKDYNVTLTSEIKRVDIAVEDLATRAKAGDFPGGTKIEYGLDKDAVGLSEHQDNISKDVLAKVEEYKQKIVDGDIKVPEKP.

Positions 1–22 (MKKRTFALALSMIIASGVILGA) are cleaved as a signal peptide. The N-palmitoyl cysteine moiety is linked to residue Cys23. Cys23 carries the S-diacylglycerol cysteine lipid modification.

It belongs to the BMP lipoprotein family.

The protein localises to the cell membrane. This chain is CD4+ T-cell-stimulating antigen (tcsA), found in Listeria monocytogenes serovar 1/2a (strain ATCC BAA-679 / EGD-e).